The primary structure comprises 121 residues: Large ribosomal subunit protein uL14c (121 aa).

It belongs to the universal ribosomal protein uL14 family. As to quaternary structure, part of the 50S ribosomal subunit.

It is found in the plastid. It localises to the chloroplast. Binds to 23S rRNA. In Emiliania huxleyi (Coccolithophore), this protein is Large ribosomal subunit protein uL14c.